The primary structure comprises 320 residues: Ferrochelatase (320 aa).

2 residues coordinate Fe cation: His-194 and Glu-275.

It belongs to the ferrochelatase family. In terms of assembly, monomer.

The protein resides in the cytoplasm. The catalysed reaction is heme b + 2 H(+) = protoporphyrin IX + Fe(2+). The protein operates within porphyrin-containing compound metabolism; protoheme biosynthesis; protoheme from protoporphyrin-IX: step 1/1. Its function is as follows. Catalyzes the ferrous insertion into protoporphyrin IX. The protein is Ferrochelatase of Escherichia coli O81 (strain ED1a).